The chain runs to 319 residues: Taste receptor type 2 member 14 (319 aa).

Topologically, residues 1–7 (MDGVIKS) are extracellular. A helical transmembrane segment spans residues 8–28 (IFTFILILEFIIGNLGNSFIV). Topologically, residues 29-55 (LVNCIDWVKRRKISLVDQLLIALAISR) are cytoplasmic. The helical transmembrane segment at 56 to 76 (ISLVWSIFGSWCVSVVFPALF) threads the bilayer. Residues 77–87 (ATEKLLRMLTN) lie on the Extracellular side of the membrane. The cholesterol site is built by Thr-86 and Trp-89. A helical transmembrane segment spans residues 88-108 (IWTVTNHFSVWLATILGTFYF). Over 109-129 (LKIANFSNSIFLYLKWRVKKV) the chain is Cytoplasmic. The chain crosses the membrane as a helical span at residues 130–150 (VLVLLLVTLVLLFLNILLINI). The Extracellular portion of the chain corresponds to 151–184 (HINASINGYRGNMTCSSASCNFIRFSSAIALTST). Residues Asn-153 and Asn-162 are each glycosylated (N-linked (GlcNAc...) asparagine). Ala-180 provides a ligand contact to cholesterol. A helical membrane pass occupies residues 185–205 (VFILIPFTLSLATFLLLSFSL). Over 206–232 (WKHRKKMQHTVKGYRDVSTKAHRGVMQ) the chain is Cytoplasmic. The helical transmembrane segment at 233 to 253 (TVITFLLLYAVFFLTFFVSIW) threads the bilayer. Over 254–261 (ISERLKEN) the chain is Extracellular. A helical membrane pass occupies residues 262–282 (QIIILSEMMGLAYPSGHSCVL). Cholesterol contacts are provided by Ile-265 and Glu-268. Residues 283–317 (ILGNKKLRQASLSVLWWLRYRFKDGELSGHKEFRE) are Cytoplasmic-facing.

Belongs to the G-protein coupled receptor T2R family. In terms of assembly, core component of the TAS2R14-GNAI1 complex, consisting of TAS2R14, GNAI1, GNB1 and GNG2; within the complex interacts with GNAI1. Core component of the TAS2R14-GNAT3 complex, consisting of TAS2R14, GNAT3, GNB1 and GNG2; within the complex interacts with GNAT3. Core component of the TAS2R14-GNAS2 complex, consisting of TAS2R14, GNAS2, GNB1 and GNG2; within the complex interacts with GNAS2.

It is found in the membrane. The catalysed reaction is Ca(2+)(in) = Ca(2+)(out). The enzyme catalyses 3',5'-cyclic AMP(in) = 3',5'-cyclic AMP(out). Basal activity is enhanced by binding to bitter tastants, such as flufenamic acid and aristolochic acid. Regulated by cholesterol in a concentration-dependent manner. Its function is as follows. Gustducin-linked G-protein coupled receptor that plays a role in the perception of bitterness. The activity of this receptor stimulates GNAT3, activating the gustducin G-protein pathway. Likely plays a role in sensing the chemical composition of the gastrointestinal content and other extra-oral tissues via the inhibitory G-protein pathways. The chain is Taste receptor type 2 member 14 (TAS2R14) from Papio hamadryas (Hamadryas baboon).